We begin with the raw amino-acid sequence, 586 residues long: Merlin (586 aa).

Ser-9 carries the post-translational modification Phosphoserine. The 290-residue stretch at 18-307 (FTVRIVTMDA…GNHDLFMRRR (290 aa)) folds into the FERM domain. Residues 325–354 (KARKQMERQRLAREKQMREEAERSRDEPER) form a disordered region. At Ser-514 the chain carries Phosphoserine; by PAK. The disordered stretch occupies residues 557–586 (LHSEHSDSGTSSKHNTIKKPQAQGRRPICI).

In terms of assembly, interacts with NHERF1, HGS and AGAP2. Interacts with SGSM3. Interacts (via FERM domain) with MPP1. Interacts with LAYN and WWC1. Interacts with the CUL4A-RBX1-DDB1-VprBP/DCAF1 E3 ubiquitin-protein ligase complex. The unphosphorylated form interacts (via FERM domain) with VPRBP/DCAF1. Interacts (via FERM domain) with NOP53; the interaction is direct. Interacts with SCHIP1; the interaction is direct. Post-translationally, ubiquitinated by the CUL4A-RBX1-DDB1-DCAF1/VprBP E3 ubiquitin-protein ligase complex for ubiquitination and subsequent proteasome-dependent degradation. Phosphorylation of Ser-514 inhibits nuclear localization by disrupting the intramolecular association of the FERM domain with the C-terminal tail. The dephosphorylation of Ser-514 favors the interaction with NOP53.

The protein resides in the cell membrane. It is found in the cell projection. The protein localises to the cytoplasm. It localises to the cytoskeleton. Its subcellular location is the nucleus. Probable regulator of the Hippo/SWH (Sav/Wts/Hpo) signaling pathway, a signaling pathway that plays a pivotal role in tumor suppression by restricting proliferation and promoting apoptosis. Along with WWC1 can synergistically induce the phosphorylation of LATS1 and LATS2 and can probably function in the regulation of the Hippo/SWH (Sav/Wts/Hpo) signaling pathway. May act as a membrane stabilizing protein. May inhibit PI3 kinase by binding to AGAP2 and impairing its stimulating activity. Suppresses cell proliferation and tumorigenesis by inhibiting the CUL4A-RBX1-DDB1-VprBP/DCAF1 E3 ubiquitin-protein ligase complex Plays a role in lens development and is required for complete fiber cell terminal differentiation, maintenance of cell polarity and separation of the lens vesicle from the corneal epithelium. In Rattus norvegicus (Rat), this protein is Merlin (Nf2).